Consider the following 938-residue polypeptide: LPS-assembly protein LptD (938 aa).

The signal sequence occupies residues 1–33 (MAVKHPAFRKKFPLLVTGSLLALQPAFSLQSFA). Residues 52-96 (KTATSALPPRPQHSRSAVSTTSGSATATATKQEPAPVLVTESKGR) form a disordered region. Residues 65 to 81 (SRSAVSTTSGSATATAT) show a composition bias toward low complexity.

Belongs to the LptD family. Component of the lipopolysaccharide transport and assembly complex. Interacts with LptE and LptA.

The protein localises to the cell outer membrane. Functionally, together with LptE, is involved in the assembly of lipopolysaccharide (LPS) at the surface of the outer membrane. This chain is LPS-assembly protein LptD, found in Ectopseudomonas mendocina (strain ymp) (Pseudomonas mendocina).